The primary structure comprises 333 residues: Protoheme IX farnesyltransferase (333 aa).

Helical transmembrane passes span 36–56, 61–81, 107–127, 130–150, 158–178, 186–206, 243–263, and 284–304; these read LIPLLLATTLGGMALTEGWPL, LVCTLGGGALAAAAAGVLNCL, AAFAGAVSCALAAATLLVSGV, LAAGLSLLGLCSYVLLYTALL, IVIGGVAGAIPPLVGAAAATG, WLFALVMVWTPAHFWALALLL, FLGVWALPEGGLLYGLLLLPF, and AKGLFRWSILYLFGICLLLVF.

Belongs to the UbiA prenyltransferase family. Protoheme IX farnesyltransferase subfamily.

The protein resides in the cell inner membrane. It catalyses the reaction heme b + (2E,6E)-farnesyl diphosphate + H2O = Fe(II)-heme o + diphosphate. Its pathway is porphyrin-containing compound metabolism; heme O biosynthesis; heme O from protoheme: step 1/1. Its function is as follows. Converts heme B (protoheme IX) to heme O by substitution of the vinyl group on carbon 2 of heme B porphyrin ring with a hydroxyethyl farnesyl side group. This is Protoheme IX farnesyltransferase from Synechococcus sp. (strain WH7803).